The primary structure comprises 239 residues: MEIQIIRCLQDNYSYLIVDKAKNIACVIDPSEAKPVIKYLEDKNIHLKYILNTHHHYDHVGGNKELKEKYGASVIGYKGDKDRIPEIDILVGDQDIWHEENFQAKIFHIPGHTLGHICFYFYNEESVFTGDTLFSLGCGKIFEGTYSQMYNSLMKIKALPEKTKIYCGHEYTKQNSKFCIAHDQDNENLKVKIKLIDEKLEKNLPTIPSTIKEELECNIFLRSGTEENFSKLRDLKDNF.

Zn(2+) contacts are provided by histidine 54, histidine 56, aspartate 58, histidine 59, histidine 112, aspartate 131, and histidine 169.

Belongs to the metallo-beta-lactamase superfamily. Glyoxalase II family. As to quaternary structure, monomer. Zn(2+) serves as cofactor.

It carries out the reaction an S-(2-hydroxyacyl)glutathione + H2O = a 2-hydroxy carboxylate + glutathione + H(+). It functions in the pathway secondary metabolite metabolism; methylglyoxal degradation; (R)-lactate from methylglyoxal: step 2/2. Functionally, thiolesterase that catalyzes the hydrolysis of S-D-lactoyl-glutathione to form glutathione and D-lactic acid. In Pelagibacter ubique (strain HTCC1062), this protein is Hydroxyacylglutathione hydrolase.